Consider the following 299-residue polypeptide: Zinc import ATP-binding protein ZnuC (299 aa).

The ABC transporter domain maps to 13–228 (VSLANAGVQR…PEYMRLFGGT (216 aa)). An ATP-binding site is contributed by 45-52 (GPNGSGKS).

It belongs to the ABC transporter superfamily. Zinc importer (TC 3.A.1.15.5) family. As to quaternary structure, the complex is composed of two ATP-binding proteins (ZnuC), two transmembrane proteins (ZnuB) and a solute-binding protein (ZnuA).

It is found in the cell inner membrane. It catalyses the reaction Zn(2+)(out) + ATP(in) + H2O(in) = Zn(2+)(in) + ADP(in) + phosphate(in) + H(+)(in). Its function is as follows. Part of the ABC transporter complex ZnuABC involved in zinc import. Responsible for energy coupling to the transport system. In Agrobacterium fabrum (strain C58 / ATCC 33970) (Agrobacterium tumefaciens (strain C58)), this protein is Zinc import ATP-binding protein ZnuC.